Reading from the N-terminus, the 680-residue chain is Oligopeptidase A (680 aa).

His469 is a Zn(2+) binding site. Glu470 is an active-site residue. Residues His473 and His476 each coordinate Zn(2+).

The protein belongs to the peptidase M3 family. The cofactor is Zn(2+).

It carries out the reaction Hydrolysis of oligopeptides, with broad specificity. Gly or Ala commonly occur as P1 or P1' residues, but more distant residues are also important, as is shown by the fact that Z-Gly-Pro-Gly-|-Gly-Pro-Ala is cleaved, but not Z-(Gly)(5).. In terms of biological role, may play a specific role in the degradation of signal peptides after they are released from precursor forms of secreted proteins. Can cleave N-acetyl-L-Ala(4). This Escherichia coli (strain K12) protein is Oligopeptidase A (prlC).